The primary structure comprises 1497 residues: Collagen alpha-2(V) chain (1497 aa).

The N-terminal stretch at 1–26 is a signal peptide; that stretch reads MMANWVGARPLLILSVLLGYCVSIKA. Positions 38–96 constitute a VWFC domain; it reads IACTQHGQMYLNRDIWKPSPCQICVCDNGAILCDKIECPEVLNCANPITPTGECCPVCP. The interval 103-1265 is disordered; it reads TSFGRGRKGQ…PDDTNKTDPG (1163 aa). The short motif at 141 to 143 is the Cell attachment site element; sequence RGD. Positions 155-164 are enriched in low complexity; the sequence is PQGIDGEPGV. Positions 168–180 are enriched in pro residues; the sequence is PGAPGPPGHPSHP. A compositionally biased stretch (low complexity) spans 210 to 225; that stretch reads PGSVGPVGPRGPQGLQ. Residues 234–246 show a composition bias toward pro residues; it reads AGPPGEPGEPGPM. A 4-hydroxyproline mark is found at proline 288, proline 291, and proline 294. 2 stretches are compositionally biased toward low complexity: residues 320–338 and 425–441; these read EAGPTGPMGAMGPLGPRGM and TPGAKGPTGSAGTSGPP. The short motif at 504 to 506 is the Cell attachment site element; that stretch reads RGD. Over residues 550–559 the composition is skewed to gly residues; that stretch reads GPKGGQGDPG. Residues 602–611 are compositionally biased toward low complexity; sequence SIGIRGQPGS. Residues proline 609 and proline 615 each carry the 4-hydroxyproline modification. Over residues 708–719 the composition is skewed to basic and acidic residues; that stretch reads RGERGNPGERGE. A compositionally biased stretch (gly residues) spans 730-739; it reads GMAGGHGPDG. Positions 744 to 756 are enriched in low complexity; it reads PGPTGTIGDTGPP. Positions 774-785 are enriched in basic and acidic residues; sequence KGDRGGIGEKGA. Low complexity-rich tracts occupy residues 824 to 839 and 878 to 891; these read PPGSRGNPGSRGENGP and LAGSPGPHGPHGVP. A compositionally biased stretch (gly residues) spans 892–901; it reads GLKGGRGTQG. The span at 917-927 shows a compositional bias: pro residues; sequence PPGPAGAPGPA. 3 consecutive short sequence motifs (cell attachment site) follow at residues 942-944, 1065-1067, and 1068-1070; these read RGD. Residues 1061–1070 are compositionally biased toward basic and acidic residues; sequence AVGERGDRGD. The segment covering 1091–1112 has biased composition (low complexity); sequence APGDAGQRGEPGSRGPVGPPGR. 2 short sequence motifs (cell attachment site) span residues 1125–1127 and 1134–1136; these read RGD. The segment covering 1125 to 1139 has biased composition (basic and acidic residues); that stretch reads RGDKGDNGDRGDRGQ. 2 stretches are compositionally biased toward pro residues: residues 1169-1179 and 1209-1224; these read PFGPRGPPGPV and EGPPGEPGPPGPPGPP. Positions 1228–1497 are cleaved as a propeptide — C-terminal propeptide; it reads TAALGDIMGH…GLDIGPVCFM (270 aa). Residue asparagine 1260 is glycosylated (N-linked (GlcNAc...) asparagine). In terms of domain architecture, Fibrillar collagen NC1 spans 1264-1497; it reads PGIHVTLKSL…GLDIGPVCFM (234 aa). Cystine bridges form between cysteine 1294/cysteine 1326, cysteine 1334/cysteine 1495, and cysteine 1403/cysteine 1448. Ca(2+)-binding residues include aspartate 1312, asparagine 1314, glutamine 1315, and aspartate 1320. N-linked (GlcNAc...) asparagine glycosylation occurs at asparagine 1398.

The protein belongs to the fibrillar collagen family. In terms of assembly, trimers of two alpha 1(V) and one alpha 2(V) chains expressed in most tissues and trimers of one alpha 1(V), one alpha 2(V), and one alpha 3(V) chains with a more limited distribution of expression. Post-translationally, prolines at the third position of the tripeptide repeating unit (G-X-P) are hydroxylated in some or all of the chains. Probably 3-hydroxylated on prolines by LEPREL1. In terms of processing, hydroxylation on proline residues within the sequence motif, GXPG, is most likely to be 4-hydroxy as this fits the requirement for 4-hydroxylation in vertebrates.

The protein localises to the secreted. Its subcellular location is the extracellular space. It is found in the extracellular matrix. Functionally, type V collagen is a member of group I collagen (fibrillar forming collagen). It is a minor connective tissue component of nearly ubiquitous distribution. Type V collagen binds to DNA, heparan sulfate, thrombospondin, heparin, and insulin. Type V collagen is a key determinant in the assembly of tissue-specific matrices. The polypeptide is Collagen alpha-2(V) chain (Mus musculus (Mouse)).